Consider the following 489-residue polypeptide: Cysteine--tRNA ligase (489 aa).

Cys-27 is a Zn(2+) binding site. The 'HIGH' region motif lies at Val-29–His-39. Zn(2+)-binding residues include Cys-211, His-236, and Glu-240. The 'KMSKS' region signature appears at Lys-268–Ser-272. ATP is bound at residue Lys-271.

This sequence belongs to the class-I aminoacyl-tRNA synthetase family. As to quaternary structure, monomer. It depends on Zn(2+) as a cofactor.

It localises to the cytoplasm. It catalyses the reaction tRNA(Cys) + L-cysteine + ATP = L-cysteinyl-tRNA(Cys) + AMP + diphosphate. The protein is Cysteine--tRNA ligase of Prochlorococcus marinus (strain MIT 9215).